A 401-amino-acid polypeptide reads, in one-letter code: 1-deoxy-D-xylulose 5-phosphate reductoisomerase (401 aa).

NADPH-binding residues include Thr10, Gly11, Ser12, Ile13, Gly36, Asn38, and Asn124. 1-deoxy-D-xylulose 5-phosphate is bound at residue Lys125. Glu126 is a binding site for NADPH. Asp150 provides a ligand contact to Mn(2+). Residues Ser151, Glu152, Ser186, and His209 each contribute to the 1-deoxy-D-xylulose 5-phosphate site. Glu152 is a binding site for Mn(2+). Gly215 contacts NADPH. Ser222, Asn227, Lys228, and Glu231 together coordinate 1-deoxy-D-xylulose 5-phosphate. Glu231 is a binding site for Mn(2+).

This sequence belongs to the DXR family. The cofactor is Mg(2+). Mn(2+) serves as cofactor.

It carries out the reaction 2-C-methyl-D-erythritol 4-phosphate + NADP(+) = 1-deoxy-D-xylulose 5-phosphate + NADPH + H(+). It participates in isoprenoid biosynthesis; isopentenyl diphosphate biosynthesis via DXP pathway; isopentenyl diphosphate from 1-deoxy-D-xylulose 5-phosphate: step 1/6. In terms of biological role, catalyzes the NADPH-dependent rearrangement and reduction of 1-deoxy-D-xylulose-5-phosphate (DXP) to 2-C-methyl-D-erythritol 4-phosphate (MEP). This Vibrio parahaemolyticus serotype O3:K6 (strain RIMD 2210633) protein is 1-deoxy-D-xylulose 5-phosphate reductoisomerase.